A 320-amino-acid polypeptide reads, in one-letter code: 33 kDa chaperonin (320 aa).

Basic and acidic residues predominate over residues 1 to 17 (MTDASGSERLKRTKDIS). The tract at residues 1-27 (MTDASGSERLKRTKDISESTPPSSLPD) is disordered. 2 disulfide bridges follow: Cys-262–Cys-264 and Cys-295–Cys-298.

Belongs to the HSP33 family. Under oxidizing conditions two disulfide bonds are formed involving the reactive cysteines. Under reducing conditions zinc is bound to the reactive cysteines and the protein is inactive.

It localises to the cytoplasm. Redox regulated molecular chaperone. Protects both thermally unfolding and oxidatively damaged proteins from irreversible aggregation. Plays an important role in the bacterial defense system toward oxidative stress. This Synechococcus sp. (strain JA-3-3Ab) (Cyanobacteria bacterium Yellowstone A-Prime) protein is 33 kDa chaperonin.